The primary structure comprises 401 residues: 8-amino-7-oxononanoate synthase (401 aa).

Arg24 contacts substrate. Position 111-112 (111-112 (GF)) interacts with pyridoxal 5'-phosphate. Substrate is bound at residue His137. The pyridoxal 5'-phosphate site is built by Ser183, His211, and Thr240. Lys243 bears the N6-(pyridoxal phosphate)lysine mark. Position 357 (Thr357) interacts with substrate.

This sequence belongs to the class-II pyridoxal-phosphate-dependent aminotransferase family. BioF subfamily. In terms of assembly, homodimer. It depends on pyridoxal 5'-phosphate as a cofactor.

The catalysed reaction is 6-carboxyhexanoyl-[ACP] + L-alanine + H(+) = (8S)-8-amino-7-oxononanoate + holo-[ACP] + CO2. It participates in cofactor biosynthesis; biotin biosynthesis. In terms of biological role, catalyzes the decarboxylative condensation of pimeloyl-[acyl-carrier protein] and L-alanine to produce 8-amino-7-oxononanoate (AON), [acyl-carrier protein], and carbon dioxide. The chain is 8-amino-7-oxononanoate synthase from Xanthomonas euvesicatoria pv. vesicatoria (strain 85-10) (Xanthomonas campestris pv. vesicatoria).